We begin with the raw amino-acid sequence, 190 residues long: Hypoxanthine/guanine phosphoribosyltransferase (190 aa).

The protein belongs to the purine/pyrimidine phosphoribosyltransferase family. Archaeal HPRT subfamily. Homodimer.

It is found in the cytoplasm. It carries out the reaction IMP + diphosphate = hypoxanthine + 5-phospho-alpha-D-ribose 1-diphosphate. The catalysed reaction is GMP + diphosphate = guanine + 5-phospho-alpha-D-ribose 1-diphosphate. The protein operates within purine metabolism; IMP biosynthesis via salvage pathway; IMP from hypoxanthine: step 1/1. Functionally, catalyzes a salvage reaction resulting in the formation of IMP that is energically less costly than de novo synthesis. The polypeptide is Hypoxanthine/guanine phosphoribosyltransferase (Methanohalobium evestigatum (strain ATCC BAA-1072 / DSM 3721 / NBRC 107634 / OCM 161 / Z-7303)).